We begin with the raw amino-acid sequence, 87 residues long: Small ribosomal subunit protein bS20 (87 aa).

It belongs to the bacterial ribosomal protein bS20 family.

In terms of biological role, binds directly to 16S ribosomal RNA. The protein is Small ribosomal subunit protein bS20 of Corynebacterium jeikeium (strain K411).